Consider the following 987-residue polypeptide: SNF2 domain-containing protein ENL1 (987 aa).

Disordered stretches follow at residues Met1–Gly172 and Phe224–Ala245. Composition is skewed to pro residues over residues Thr18–Ala27 and Asn51–Pro71. Over residues Asp99–Thr110 the composition is skewed to basic and acidic residues. A compositionally biased stretch (polar residues) spans Pro141–Phe156. Residues Asp226–Ala237 show a composition bias toward acidic residues. In terms of domain architecture, Helicase ATP-binding spans Trp292–Glu466. Asp305 to Thr312 serves as a coordination point for ATP. Residues Asp417–His420 carry the DEAH box motif. The region spanning Ser645 to Gln801 is the Helicase C-terminal domain.

It belongs to the SNF2/RAD54 helicase family. Expressed in ovaries, roots, shoots and leaves.

It is found in the cytoplasm. It localises to the chromosome. Its function is as follows. DNA helicase that acts as an essential component of the spindle assembly checkpoint. Plays an indispensable role in the development of seed endosperm. Is required to secure sister chromosome separation during endosperm syncytial mitosis, which involves extremely rapid free nuclear cycles. This chain is SNF2 domain-containing protein ENL1, found in Oryza sativa subsp. japonica (Rice).